A 577-amino-acid polypeptide reads, in one-letter code: Vacuolar membrane amino acid uptake transporter fnx2 (577 aa).

The segment covering 1 to 14 (MSNPRTKSPNTNRG) has biased composition (polar residues). Residues 1–80 (MSNPRTKSPN…SPHRQDAATT (80 aa)) are disordered. The span at 22–39 (SALLNDSLSSLNGNSSYD) shows a compositional bias: low complexity. Over residues 40-62 (SIKDSSKNNKDVAEVNEYPRRPE) the composition is skewed to basic and acidic residues. 14 helical membrane-spanning segments follow: residues 91–111 (VLPA…IVAS), 123–145 (FSQV…PLFG), 157–177 (LLAA…SRSL), 186–206 (IAGI…SDIV), 217–237 (IINV…GYFA), 244–264 (IGFL…YFTL), 286–306 (LILL…GGNV), 317–337 (LLIA…FVAF), 356–376 (LCNF…PLFF), 391–411 (LIPM…VISL), 418–438 (ITVG…RYGY), 448–468 (YPFS…VAII), 490–510 (GCVL…GIKL), and 547–567 (LLGS…CAFV).

This sequence belongs to the major facilitator superfamily.

It is found in the vacuole. Its subcellular location is the membrane. Its function is as follows. MFS-type transporter involved in vacuolar amino acid uptake. The sequence is that of Vacuolar membrane amino acid uptake transporter fnx2 (fnx2) from Schizosaccharomyces pombe (strain 972 / ATCC 24843) (Fission yeast).